We begin with the raw amino-acid sequence, 280 residues long: Chemotaxis protein methyltransferase 2 (280 aa).

The region spanning 10–280 is the CheR-type methyltransferase domain; it reads FGNQEFHYTR…SVGQTVYSPA (271 aa). Residues N85, T87, R91, E125, D150, 208 to 209, and 226 to 227 each bind S-adenosyl-L-methionine; these read NL and RN.

As to quaternary structure, interacts with the C-terminal pentapeptide GWEEF of the methyl-accepting chemotaxis protein McpB.

It carries out the reaction L-glutamyl-[protein] + S-adenosyl-L-methionine = [protein]-L-glutamate 5-O-methyl ester + S-adenosyl-L-homocysteine. Methylation of the methyl-accepting chemotaxis proteins (MCP) to form gamma-glutamyl methyl ester residues in MCP. It specifically targets the McpB chemoreceptor. The chain is Chemotaxis protein methyltransferase 2 from Pseudomonas aeruginosa (strain ATCC 15692 / DSM 22644 / CIP 104116 / JCM 14847 / LMG 12228 / 1C / PRS 101 / PAO1).